The following is a 144-amino-acid chain: IgW chain C region, secreted form 1/3 (144 aa).

Residues 1–82 (VYNQTTAVLG…AGSRFNDRIS (82 aa)) enclose the Ig-like domain. Residues asparagine 3, asparagine 43, and asparagine 123 are each glycosylated (N-linked (GlcNAc...) asparagine). Cysteine 11 and cysteine 68 are joined by a disulfide. A secretory tail region spans residues 87 to 144 (KGGTINLPVPGGNTPCTCPPCSCSGCMPKLVYQTDLNVTLENGGQLQYNCHQQACKIK).

In terms of tissue distribution, expressed mainly in lymphoid tissues including spleen, epigonal organ and circulating lymphocytes.

The protein resides in the secreted. In Heterodontus francisci (Horn shark), this protein is IgW chain C region, secreted form 1/3.